Reading from the N-terminus, the 534-residue chain is Protein BFR2 (534 aa).

The tract at residues 27–148 (ENASLFQHNE…ETEEAQQKRH (122 aa)) is disordered. Residues Ser-41 and Ser-44 each carry the phosphoserine modification. Positions 52 to 77 (EETKKAHYLEVEKSKLRAEKGLELND) are enriched in basic and acidic residues. Residues 86–161 (SRQALYEEVS…KLIQQETKQA (76 aa)) adopt a coiled-coil conformation. 2 stretches are compositionally biased toward acidic residues: residues 93 to 114 (EVSE…EEDA) and 121 to 142 (SEDE…ETEE). Phosphoserine occurs at positions 366, 372, and 379.

It belongs to the AATF family.

Its subcellular location is the nucleus. It is found in the nucleolus. Functionally, involved in endoplasmic reticulum to Golgi transport. Involved in a protein-transport step blocked by brefeldin A, which disrupts the Golgi apparatus and its incoming protein flux. May also be involved for mass growth or cell proliferation. The sequence is that of Protein BFR2 (BFR2) from Saccharomyces cerevisiae (strain ATCC 204508 / S288c) (Baker's yeast).